We begin with the raw amino-acid sequence, 305 residues long: Serine/threonine-protein phosphatase 6 catalytic subunit (305 aa).

Met1 bears the N-acetylmethionine mark. Positions 53, 55, 81, and 113 each coordinate Mn(2+). The Proton donor role is filled by His114. The Mn(2+) site is built by His163 and His237.

Belongs to the PPP phosphatase family. PP-6 (PP-V) subfamily. As to quaternary structure, protein phosphatase 6 (PP6) holoenzyme is proposed to be a heterotrimeric complex formed by the catalytic subunit, a SAPS domain-containing subunit (PP6R) and an ankyrin repeat-domain containing regulatory subunit (ARS). Interacts with subunits PPP6R1, PPP6R2 and PPP6R3. Interacts with subunit ANKRD28. Interacts with IGBP1. Interacts with MAP3K7. Interacts with NFKBIE. Interacts with TRIM14 and WRNIP1; these interactions positively regulate the RIG-I signaling pathway. Mn(2+) is required as a cofactor. Ubiquitously expressed in all tissues tested with strongest expression in lung, spleen, liver, kidney and brain. Weaker expression observed in bladder, pancreas, heart and skeletal muscle.

The protein localises to the mitochondrion. It is found in the cytoplasm. The enzyme catalyses O-phospho-L-seryl-[protein] + H2O = L-seryl-[protein] + phosphate. The catalysed reaction is O-phospho-L-threonyl-[protein] + H2O = L-threonyl-[protein] + phosphate. Catalytic subunit of protein phosphatase 6 (PP6). PP6 is a component of a signaling pathway regulating cell cycle progression in response to IL2 receptor stimulation. N-terminal domain restricts G1 to S phase progression in cancer cells, in part through control of cyclin D13 During mitosis, regulates spindle positioning. Down-regulates MAP3K7 kinase activation of the IL1 signaling pathway by dephosphorylation of MAP3K7. Acts as a regulator of innate immunity by mediating dephosphorylation CGAS, STING1 and RIGI. Also participates in the innate immune defense against viruses by desphosphorylating RIGI, an essential step that triggers RIGI-mediated signaling activation. Also regulates innate immunity by acting as a negative regulator of the cGAS-STING pathway: mediates dephosphorylation and inactivation of CGAS and STING1. CGAS dephosphorylation at 'Ser-420' impairs its ability to bind GTP, thereby inactivating it. This Mus musculus (Mouse) protein is Serine/threonine-protein phosphatase 6 catalytic subunit.